We begin with the raw amino-acid sequence, 171 residues long: 2-C-methyl-D-erythritol 2,4-cyclodiphosphate synthase (171 aa).

Residues D8 and H10 each coordinate a divalent metal cation. Residues 8–10 (DVH) and 34–35 (HS) each bind 4-CDP-2-C-methyl-D-erythritol 2-phosphate. Residue H42 participates in a divalent metal cation binding. 4-CDP-2-C-methyl-D-erythritol 2-phosphate is bound by residues 56–58 (DIG), 61–65 (FPDTD), 132–135 (TTTE), F139, and R142.

It belongs to the IspF family. As to quaternary structure, homotrimer. It depends on a divalent metal cation as a cofactor.

The catalysed reaction is 4-CDP-2-C-methyl-D-erythritol 2-phosphate = 2-C-methyl-D-erythritol 2,4-cyclic diphosphate + CMP. Its pathway is isoprenoid biosynthesis; isopentenyl diphosphate biosynthesis via DXP pathway; isopentenyl diphosphate from 1-deoxy-D-xylulose 5-phosphate: step 4/6. In terms of biological role, involved in the biosynthesis of isopentenyl diphosphate (IPP) and dimethylallyl diphosphate (DMAPP), two major building blocks of isoprenoid compounds. Catalyzes the conversion of 4-diphosphocytidyl-2-C-methyl-D-erythritol 2-phosphate (CDP-ME2P) to 2-C-methyl-D-erythritol 2,4-cyclodiphosphate (ME-CPP) with a corresponding release of cytidine 5-monophosphate (CMP). The sequence is that of 2-C-methyl-D-erythritol 2,4-cyclodiphosphate synthase from Geotalea daltonii (strain DSM 22248 / JCM 15807 / FRC-32) (Geobacter daltonii).